The chain runs to 130 residues: Small ribosomal subunit protein uS8 (130 aa).

The protein belongs to the universal ribosomal protein uS8 family. In terms of assembly, part of the 30S ribosomal subunit. Contacts proteins S5 and S12.

In terms of biological role, one of the primary rRNA binding proteins, it binds directly to 16S rRNA central domain where it helps coordinate assembly of the platform of the 30S subunit. The protein is Small ribosomal subunit protein uS8 of Aeromonas salmonicida (strain A449).